Consider the following 215-residue polypeptide: Glutathione S-transferase D4 (215 aa).

Residues 1-80 (MDFYYSPRSS…YLVEKYGKDD (80 aa)) form the GST N-terminal domain. Residues serine 9, 50-52 (HTI), and 64-66 (ESR) each bind glutathione. The GST C-terminal domain maps to 86 to 207 (DPQKRALINQ…KGLLQMKTMY (122 aa)).

The protein belongs to the GST superfamily. Delta family. As to quaternary structure, homodimer.

It catalyses the reaction RX + glutathione = an S-substituted glutathione + a halide anion + H(+). In terms of biological role, conjugation of reduced glutathione to a wide number of exogenous and endogenous hydrophobic electrophiles. May be involved in detoxification. The polypeptide is Glutathione S-transferase D4 (Drosophila melanogaster (Fruit fly)).